A 203-amino-acid chain; its full sequence is MPGRTRRDGGSESGGKDRRDRRDGGRGGAAQEKTPQFERVVTINRVAKVVKGGRRFSFTALVVVGDGDGMVGVGYGKAKEVPAAIAKGVEEAKKNFFRVPRLGGTITHPVQGEDAAGVVLLRPASAGTGVIAGGPVRAVLECAGVHDVLSKSLGSDNPINIVHATVAALKQLQRPEEVAARRGLPLEDVAPAFMLRARAGQGA.

The span at 1–25 shows a compositional bias: basic and acidic residues; it reads MPGRTRRDGGSESGGKDRRDRRDGG. The tract at residues 1–36 is disordered; the sequence is MPGRTRRDGGSESGGKDRRDRRDGGRGGAAQEKTPQ. The S5 DRBM domain occupies 36–99; it reads QFERVVTINR…EEAKKNFFRV (64 aa).

Belongs to the universal ribosomal protein uS5 family. As to quaternary structure, part of the 30S ribosomal subunit. Contacts proteins S4 and S8.

Its function is as follows. With S4 and S12 plays an important role in translational accuracy. In terms of biological role, located at the back of the 30S subunit body where it stabilizes the conformation of the head with respect to the body. In Saccharopolyspora erythraea (strain ATCC 11635 / DSM 40517 / JCM 4748 / NBRC 13426 / NCIMB 8594 / NRRL 2338), this protein is Small ribosomal subunit protein uS5.